A 439-amino-acid polypeptide reads, in one-letter code: Tol-Pal system protein TolB (439 aa).

An N-terminal signal peptide occupies residues 1–22 (MTKFPRWLAMLVGLLFPLSALT).

This sequence belongs to the TolB family. As to quaternary structure, the Tol-Pal system is composed of five core proteins: the inner membrane proteins TolA, TolQ and TolR, the periplasmic protein TolB and the outer membrane protein Pal. They form a network linking the inner and outer membranes and the peptidoglycan layer.

It localises to the periplasm. In terms of biological role, part of the Tol-Pal system, which plays a role in outer membrane invagination during cell division and is important for maintaining outer membrane integrity. This chain is Tol-Pal system protein TolB, found in Xylella fastidiosa (strain Temecula1 / ATCC 700964).